The following is a 98-amino-acid chain: uncharacterized protein (98 aa).

The disordered stretch occupies residues 1 to 63; it reads MPRDKKLVHR…NGHSQPAIVA (63 aa). Residues 14–29 show a composition bias toward acidic residues; sequence DVEDEDNDQREEEWSD. The span at 48–57 shows a compositional bias: polar residues; sequence EPSSASNGHS.

This is an uncharacterized protein from Aedes vexans (Inland floodwater mosquito).